The following is a 455-amino-acid chain: Killer cell immunoglobulin-like receptor 3DL2 (455 aa).

Residues 1 to 21 (MSLTVVSMACVGFFLLQGAWP) form the signal peptide. Over 22 to 340 (LMGGQDKPFL…SKSGICRHLH (319 aa)) the chain is Extracellular. Ig-like C2-type domains follow at residues 42-102 (GGHV…RPHS), 137-202 (GETV…VPHS), and 237-300 (GENV…FRAL). Intrachain disulfides connect cysteine 49-cysteine 95 and cysteine 144-cysteine 195. N-linked (GlcNAc...) asparagine glycans are attached at residues asparagine 179, asparagine 239, asparagine 273, and asparagine 306. A disulfide bond links cysteine 244 and cysteine 293. The helical transmembrane segment at 341–360 (VLIGTSVVIFLFILLLFFLL) threads the bilayer. Residues 361–455 (YRWCSNKKNA…APQSGLEGVF (95 aa)) are Cytoplasmic-facing.

This sequence belongs to the immunoglobulin superfamily. As to quaternary structure, interacts with peptide-free HLA-F open conformer. Expressed in astrocytes.

It is found in the cell membrane. Its function is as follows. Receptor on natural killer (NK) cells and T cells for MHC class I molecules. Upon binding of peptide-free HLA-F open conformer, negatively regulates NK and T cell effector functions. Acts as a receptor on astrocytes for HLA-F. Through interaction with HLA-F, may protect motor neurons from astrocyte-induced toxicity. This is Killer cell immunoglobulin-like receptor 3DL2 from Homo sapiens (Human).